A 61-amino-acid chain; its full sequence is Small ribosomal subunit protein uS14 (61 aa).

Zn(2+) is bound by residues C24, C27, C40, and C43.

The protein belongs to the universal ribosomal protein uS14 family. Zinc-binding uS14 subfamily. In terms of assembly, part of the 30S ribosomal subunit. Contacts proteins S3 and S10. Zn(2+) serves as cofactor.

Binds 16S rRNA, required for the assembly of 30S particles and may also be responsible for determining the conformation of the 16S rRNA at the A site. The protein is Small ribosomal subunit protein uS14 of Clostridium kluyveri (strain NBRC 12016).